We begin with the raw amino-acid sequence, 163 residues long: Bursicon (163 aa).

Residues M1–A23 form the signal peptide. Cystine bridges form between C39-C88, C53-C102, C63-C123, C67-C125, and C85-C128. The CTCK domain maps to C39 to T129.

As to quaternary structure, heterodimer of burs and pburs.

The protein localises to the secreted. Its function is as follows. Final heterodimeric neurohormone released at the end of the molting cycle, involved in the sclerotization (tanning) of the insect cuticle, melanization and wing spreading. The chain is Bursicon from Aedes aegypti (Yellowfever mosquito).